We begin with the raw amino-acid sequence, 173 residues long: Crossover junction endodeoxyribonuclease RuvC (173 aa).

Residues Asp11, Glu71, and Asp143 contribute to the active site. Mg(2+) is bound by residues Asp11, Glu71, and Asp143.

It belongs to the RuvC family. In terms of assembly, homodimer which binds Holliday junction (HJ) DNA. The HJ becomes 2-fold symmetrical on binding to RuvC with unstacked arms; it has a different conformation from HJ DNA in complex with RuvA. In the full resolvosome a probable DNA-RuvA(4)-RuvB(12)-RuvC(2) complex forms which resolves the HJ. Mg(2+) is required as a cofactor.

The protein resides in the cytoplasm. The catalysed reaction is Endonucleolytic cleavage at a junction such as a reciprocal single-stranded crossover between two homologous DNA duplexes (Holliday junction).. In terms of biological role, the RuvA-RuvB-RuvC complex processes Holliday junction (HJ) DNA during genetic recombination and DNA repair. Endonuclease that resolves HJ intermediates. Cleaves cruciform DNA by making single-stranded nicks across the HJ at symmetrical positions within the homologous arms, yielding a 5'-phosphate and a 3'-hydroxyl group; requires a central core of homology in the junction. The consensus cleavage sequence is 5'-(A/T)TT(C/G)-3'. Cleavage occurs on the 3'-side of the TT dinucleotide at the point of strand exchange. HJ branch migration catalyzed by RuvA-RuvB allows RuvC to scan DNA until it finds its consensus sequence, where it cleaves and resolves the cruciform DNA. This is Crossover junction endodeoxyribonuclease RuvC from Brucella suis (strain ATCC 23445 / NCTC 10510).